Consider the following 782-residue polypeptide: MAAAAAAGPSPGSGPGDSPEGPEGEAPERRRKAHGMLKLYYGLSEGEAAGRPAGPDPLDPTDLNGAHFDPEVYLDKLRRECPLAQLMDSETDMVRQIRALDSDMQTLVYENYNKFISATDTIRKMKNDFRKMEDEMDRLATNMAVITDFSARISATLQDRHERITKLAGVHALLRKLQFLFELPSRLTKCVELGAYGQAVRYQGRAQAVLQQYQHLPSFRAIQDDCQVITARLAQQLRQRFREGGSGAPEQAECVELLLALGEPAEELCEEFLAHARGRLEKELRNLEAELGPSPPAPDVLEFTDHGGSGFVGGLCQVAAAYQELFAAQGPAGAEKLAAFARQLGSRYFALVERRLAQEQGGGDNSLLVRALDRFHRRLRAPGALLAAAGLADAATEIVERVARERLGHHLQGLRAAFLGCLTDVRQALAAPRVAGKEGPGLAELLANVASSILSHIKASLAAVHLFTAKEVSFSNKPYFRGEFCSQGVREGLIVGFVHSMCQTAQSFCDSPGEKGGATPPALLLLLSRLCLDYETATISYILTLTDEQFLVQDQFPVTPVSTLCAEARETARRLLTHYVKVQGLVISQMLRKSVETRDWLSTLEPRNVRAVMKRVVEDTTAIDVQVGLLYEEGVRKAQSSDSSKRTFSVYSSSRQQGRYAPSYTPSAPMDTNLLSNIQKLFSERIDVFSPVEFNKVSVLTGIIKISLKTLLECVRLRTFGRFGLQQVQVDCHFLQLYLWRFVADEELVHLLLDEVVASAALRCPDPVPMEPSVVEVICERG.

Residues 1-19 are compositionally biased toward low complexity; the sequence is MAAAAAAGPSPGSGPGDSP. Positions 1 to 37 are disordered; the sequence is MAAAAAAGPSPGSGPGDSPEGPEGEAPERRRKAHGML. Ala-2 is subject to N-acetylalanine. Phosphoserine is present on residues Ser-18 and Ser-44. Coiled-coil stretches lie at residues 116 to 147 and 270 to 292; these read ISATDTIRKMKNDFRKMEDEMDRLATNMAVIT and EEFLAHARGRLEKELRNLEAELG. At Ser-649 the chain carries Phosphoserine.

The protein belongs to the VPS51 family. As to quaternary structure, component of the Golgi-associated retrograde protein (GARP) complex, also called VFT (VPS fifty-three) complex, composed of VPS51, VPS52, VPS53 and VPS54. Component of the endosome-associated retrograde protein (EARP) complex, composed of VPS51, VPS52, VPS53 and VPS50/Syndetin. EIPR1 interacts with both EARP and GARP complexes and mediates the recruitment of the GARP complex to the trans-Golgi network. Interacts with STX6 (via N-terminus). Interacts with VPS50 and VPS54 in an EIPR1-independent manner.

Its subcellular location is the golgi apparatus. It is found in the trans-Golgi network. The protein resides in the recycling endosome. Its function is as follows. Acts as a component of the GARP complex that is involved in retrograde transport from early and late endosomes to the trans-Golgi network (TGN). The GARP complex is required for the maintenance of protein retrieval from endosomes to the TGN, acid hydrolase sorting, lysosome function, endosomal cholesterol traffic and autophagy. VPS51 participates in retrograde transport of acid hydrolase receptors, likely by promoting tethering and SNARE-dependent fusion of endosome-derived carriers to the TGN. Acts as a component of the EARP complex that is involved in endocytic recycling. The EARP complex associates with Rab4-positive endosomes and promotes recycling of internalized transferrin receptor (TFRC) to the plasma membrane. In Homo sapiens (Human), this protein is Vacuolar protein sorting-associated protein 51 homolog (VPS51).